The primary structure comprises 391 residues: DNA-directed RNA polymerase subunit Rpo1C (391 aa).

Belongs to the RNA polymerase beta' chain family. As to quaternary structure, part of the RNA polymerase complex.

The protein resides in the cytoplasm. It is found in the chromosome. It catalyses the reaction RNA(n) + a ribonucleoside 5'-triphosphate = RNA(n+1) + diphosphate. DNA-dependent RNA polymerase (RNAP) catalyzes the transcription of DNA into RNA using the four ribonucleoside triphosphates as substrates. Forms part of the jaw domain. The protein is DNA-directed RNA polymerase subunit Rpo1C of Thermococcus kodakarensis (strain ATCC BAA-918 / JCM 12380 / KOD1) (Pyrococcus kodakaraensis (strain KOD1)).